A 391-amino-acid chain; its full sequence is E3 ubiquitin-protein ligase RMND5A (391 aa).

The LisH domain maps to 114–146 (SQQILSEVMVEHFFRQGMLDVAEELCQEAGLSI). Residues 153-210 (PFVELNRILEALKVRVLRPALEWAVSNREMLMAQNSSLEFKLHRLYFISLLMGGTVNQ) form the CTLH domain. The RING-Gid-type zinc-finger motif lies at 336–377 (CPILRQQTTDNNPPMKLVCGHIISRDALNKMFNGSKLKCPYC).

Identified in the CTLH complex that contains at least RANBP9, MKLN1, MAEA, RMND5A, GID8 and ARMC8.

The protein localises to the nucleus. It localises to the nucleoplasm. Its subcellular location is the cytoplasm. The catalysed reaction is S-ubiquitinyl-[E2 ubiquitin-conjugating enzyme]-L-cysteine + [acceptor protein]-L-lysine = [E2 ubiquitin-conjugating enzyme]-L-cysteine + N(6)-ubiquitinyl-[acceptor protein]-L-lysine.. Its function is as follows. E3 ubiquitin-protein ligase component of the CTLH complex. The polypeptide is E3 ubiquitin-protein ligase RMND5A (rmnd5a) (Xenopus tropicalis (Western clawed frog)).